A 567-amino-acid polypeptide reads, in one-letter code: Arginine--tRNA ligase (567 aa).

The 'HIGH' region motif lies at 128-138 (ANPTGPLHVGH).

Belongs to the class-I aminoacyl-tRNA synthetase family. Monomer.

Its subcellular location is the cytoplasm. It carries out the reaction tRNA(Arg) + L-arginine + ATP = L-arginyl-tRNA(Arg) + AMP + diphosphate. The protein is Arginine--tRNA ligase of Acidovorax ebreus (strain TPSY) (Diaphorobacter sp. (strain TPSY)).